The following is a 73-amino-acid chain: Disintegrin mojastin-2 (73 aa).

The region spanning glutamate 1–glycine 73 is the Disintegrin domain. 6 disulfides stabilise this stretch: cysteine 6/cysteine 21, cysteine 8/cysteine 16, cysteine 15/cysteine 38, cysteine 29/cysteine 35, cysteine 34/cysteine 59, and cysteine 47/cysteine 66. Positions arginine 51–aspartate 53 match the Cell attachment site motif.

It belongs to the venom metalloproteinase (M12B) family. P-II subfamily. P-IIa sub-subfamily. As to quaternary structure, monomer (disintegrin). In terms of tissue distribution, expressed by the venom gland.

Its subcellular location is the secreted. In terms of biological role, inhibits the three processes involved in platelet function (adhesion, activation and aggregation). It inhibits platelet adhesion to fibronectin with an IC(50) of 58.6 nM. It inhibits ATP release from platelet induced by ADP with an IC(50) of 19.5 nM on platelet-rich plasma, probably by binding to ADP receptors (P2RY1 and P2RY12). Finally, it inhibits ADP-induced platelet aggregation with IC(50) of 44.7 nM on platelet-rich plasma and 19.3 nM on whole blood, probably by binding to alpha-IIb/beta-3 (ITGA2B/ITGB3). Inhibits ADP-induced platelet aggregation (IC(50) = 13.8 nM) probably by binding to alpha-IIb/beta-3 (ITGA2B/ITGB3) located on the platelet surface. This is Disintegrin mojastin-2 from Crotalus scutulatus scutulatus (Mojave rattlesnake).